Reading from the N-terminus, the 403-residue chain is Fasciclin-like arabinogalactan protein 2 (403 aa).

A signal peptide spans Met1 to Ala26. FAS1 domains are found at residues His27 to Leu174 and Ser187 to Leu326. Asn28, Asn130, Asn164, and Asn248 each carry an N-linked (GlcNAc...) asparagine glycan. The tract at residues Ser338 to Val371 is disordered. A lipid anchor (GPI-anchor amidated alanine) is attached at Ala378. Positions Val379–Met403 are cleaved as a propeptide — removed in mature form.

This sequence belongs to the fasciclin-like AGP family. Expressed mainly in flowers and to a lesser extent in leaves and roots.

It localises to the cell membrane. Functionally, may be a cell surface adhesion protein. The protein is Fasciclin-like arabinogalactan protein 2 (FLA2) of Arabidopsis thaliana (Mouse-ear cress).